Consider the following 204-residue polypeptide: Guanylate kinase (204 aa).

A Guanylate kinase-like domain is found at 3-181 (GTLIIITAPS…ALDDLVAVVR (179 aa)). Residue 10 to 17 (APSGAGKT) participates in ATP binding.

Belongs to the guanylate kinase family.

It is found in the cytoplasm. It carries out the reaction GMP + ATP = GDP + ADP. Its function is as follows. Essential for recycling GMP and indirectly, cGMP. The polypeptide is Guanylate kinase (Aromatoleum aromaticum (strain DSM 19018 / LMG 30748 / EbN1) (Azoarcus sp. (strain EbN1))).